Here is a 1105-residue protein sequence, read N- to C-terminus: Probable diguanylate cyclase DgcE (1105 aa).

10 helical membrane passes run 9–29, 38–58, 64–84, 88–108, 127–147, 156–176, 190–207, 211–228, 236–256, and 270–290; these read LIAL…SFIF, QFGT…VAFY, MWPG…ILLF, SLNM…AVLL, LALG…VLLT, FLIW…LGLL, LLFE…LSWL, YLPW…WSAV, FLIF…DPSL, and WLPF…MYAF. One can recognise a PAS 1 domain in the interval 300–370; it reads SETHFRNAME…QQVEKLISGE (71 aa). PAC domains are found at residues 374 to 426 and 501 to 552; these read YSME…VNQQ and FKLE…ALFQ. Positions 553–623 constitute a PAS 2 domain; sequence EKERLHITLD…LMENIYSADT (71 aa). Positions 626-680 constitute a PAC 3 domain; the sequence is SAIEQDVVLHCRSGGSYDVHYSITPLSTLDGSNIGSVLVIQDVTESRKMLRQLSY. Residues 712–845 form the GGDEF domain; the sequence is QRHALVFIDL…GRGRVTVYEP (134 aa). Asp720 is a Mg(2+) binding site. 3 residues coordinate substrate: Asn728, His733, and Asp737. Asp763 serves as a coordination point for Mg(2+). Asp763 functions as the Proton acceptor in the catalytic mechanism. Arg783 contacts substrate. Positions 855 to 1104 constitute an EAL domain; the sequence is AAMSLDEQWR…LLVNSSYFAI (250 aa).

Homodimer. Mg(2+) is required as a cofactor.

The protein localises to the cell inner membrane. The enzyme catalyses 2 GTP = 3',3'-c-di-GMP + 2 diphosphate. Its pathway is purine metabolism; 3',5'-cyclic di-GMP biosynthesis. Catalyzes the synthesis of cyclic-di-GMP (c-di-GMP) via the condensation of 2 GTP molecules. Involved in the control of the switch from cell motility to adhesion via regulation of cellular levels of c-di-GMP. Part of a signaling cascade that regulates curli biosynthesis. The cascade is composed of two c-di-GMP control modules, in which c-di-GMP controlled by the DgcE/PdeH pair (module I) regulates the activity of the DgcM/PdeR pair (module II), which in turn regulates activity of the transcription factor MlrA and expression of the master biofilm regulator csgD. This is Probable diguanylate cyclase DgcE from Escherichia coli (strain K12).